Here is an 835-residue protein sequence, read N- to C-terminus: Serine/threonine-protein kinase TNNI3K (835 aa).

Gly-2 is lipidated: N-myristoyl glycine. Residues 21–50 (SESYAIIIERLEDNLQIKENEFQELRHIFG) are a coiled coil. 10 ANK repeats span residues 66-96 (RGLSLLHLCCVCGGNKSHIRALMLKGLRPSR), 100-129 (NGFPALHLAVYKDSPELITSLLHSGADVQQ), 133-162 (GGLTALHIAAIAGHPEAAEVLLQHGANVNV), 166-195 (VFFTPLHIAAYYGHEQVTSVLLKFGADVNV), 199-228 (VGDRPLHLASAKGFFNIVKLLVEEGSKADV), 234-263 (EDHVPLHFCSRFGHHNIVSYLLQSDLEVQP), 269-298 (YGDTPLHLACYNGNFEVAKEIVQVTGTESL), 304-335 (FSETAFHSACTYGKNIDLVKFLLDQNAVNINH), 339-368 (DGHTGLHSACYHGHIRLVQFLLDNGADMNL), and 381-410 (DEQTCLMWAYEKGHDAIVTLLKHYKRPQEE). One can recognise a Protein kinase domain in the interval 463–723 (IEFHEIIGSG…EVVSKLEECL (261 aa)). ATP is bound by residues 469 to 477 (IGSGSFGKV) and Lys-490. Residue Asp-588 is the Proton acceptor of the active site.

The protein belongs to the protein kinase superfamily. TKL Ser/Thr protein kinase family. MAP kinase kinase kinase subfamily. As to quaternary structure, interacts with TNNI3, ACTC, ACTA1, MYBPC3, AIP, FABP3 and HADHB. It depends on Mg(2+) as a cofactor. Post-translationally, autophosphorylated.

The protein localises to the nucleus. The protein resides in the cytoplasm. The enzyme catalyses L-seryl-[protein] + ATP = O-phospho-L-seryl-[protein] + ADP + H(+). The catalysed reaction is L-threonyl-[protein] + ATP = O-phospho-L-threonyl-[protein] + ADP + H(+). Functionally, may play a role in cardiac physiology. In Rattus norvegicus (Rat), this protein is Serine/threonine-protein kinase TNNI3K.